The sequence spans 77 residues: MAYTYKMVQVPPNIIANRKNITTAAADYLQDVVNEWAENGWEFWRIDNFSTEEKAGCLSGGKLTMRTYKVITFRKEV.

This is an uncharacterized protein from Haemophilus phage HP1 (strain HP1c1) (Bacteriophage HP1).